Here is a 271-residue protein sequence, read N- to C-terminus: Tryptophan synthase alpha chain (271 aa).

Catalysis depends on proton acceptor residues Glu-49 and Asp-60.

It belongs to the TrpA family. Tetramer of two alpha and two beta chains.

It carries out the reaction (1S,2R)-1-C-(indol-3-yl)glycerol 3-phosphate + L-serine = D-glyceraldehyde 3-phosphate + L-tryptophan + H2O. It functions in the pathway amino-acid biosynthesis; L-tryptophan biosynthesis; L-tryptophan from chorismate: step 5/5. In terms of biological role, the alpha subunit is responsible for the aldol cleavage of indoleglycerol phosphate to indole and glyceraldehyde 3-phosphate. This chain is Tryptophan synthase alpha chain, found in Azoarcus sp. (strain BH72).